Reading from the N-terminus, the 299-residue chain is Mitochondrial 2-oxodicarboxylate carrier (299 aa).

Solcar repeat units lie at residues 11–100 (NEAS…YKKL), 107–196 (SPAL…VKNI), and 205–294 (LEFL…TYSW). Transmembrane regions (helical) follow at residues 17-37 (ILAG…LDVV), 62-82 (MIFR…PILA), 100-120 (LLGY…LGSG), 179-199 (HGVF…IIPV), 211-231 (FGIG…FDVA), and 274-290 (IMRL…VYEY).

This sequence belongs to the mitochondrial carrier (TC 2.A.29) family.

The protein localises to the mitochondrion inner membrane. It carries out the reaction 2-oxoadipate(in) + 2-oxoglutarate(out) = 2-oxoadipate(out) + 2-oxoglutarate(in). The catalysed reaction is hexanedioate(in) + 2-oxoglutarate(out) = hexanedioate(out) + 2-oxoglutarate(in). It catalyses the reaction L-2-aminoadipate(in) + 2-oxoglutarate(out) = L-2-aminoadipate(out) + 2-oxoglutarate(in). The enzyme catalyses glutarate(in) + 2-oxoglutarate(out) = glutarate(out) + 2-oxoglutarate(in). It carries out the reaction 2-oxoheptanedioate(in) + 2-oxoglutarate(out) = 2-oxoheptanedioate(out) + 2-oxoglutarate(in). The catalysed reaction is heptanedioate(in) + 2-oxoglutarate(out) = heptanedioate(out) + 2-oxoglutarate(in). It catalyses the reaction citrate(in) + 2-oxoglutarate(out) = citrate(out) + 2-oxoglutarate(in). Transports dicarboxylates across the inner membranes of mitochondria by a counter-exchange mechanism. Can transport 2-oxoadipate (2-oxohexanedioate), 2-oxoglutarate, adipate (hexanedioate), glutarate, and to a lesser extent, pimelate (heptanedioate), 2-oxopimelate (2-oxoheptanedioate), 2-aminoadipate (2-aminohexanedioate), oxaloacetate, and citrate. Plays a central role in catabolism of lysine, hydroxylysine, and tryptophan, by transporting common metabolite intermediates (such as 2-oxoadipate) into the mitochondria, where it is converted into acetyl-CoA and can enter the citric acid (TCA) cycle. The sequence is that of Mitochondrial 2-oxodicarboxylate carrier (SLC25A21) from Bos taurus (Bovine).